A 1926-amino-acid chain; its full sequence is Myosin-15 (1926 aa).

A Myosin N-terminal SH3-like domain is found at 29–79 (DGKKKCWIPDGENAYIEAEVKGSEDDGTVIVETADGESLSIKEDKIQQMNP). Residues 83 to 770 (EMIEDMAMLT…FLGQLEAIRD (688 aa)) enclose the Myosin motor domain. Position 127 is an N6,N6,N6-trimethyllysine (Lys-127). Residue 176–183 (GESGAGKT) coordinates ATP. Actin-binding stretches follow at residues 647 to 669 (LNKL…NPNV) and 749 to 763 (RFGI…GFLG). An IQ domain is found at 773–802 (LSKVFTLFQARAQGKLMRIKFQKILEERDA). Positions 833 to 1926 (KSSEVGEEVA…REFGKKVQEE (1094 aa)) form a coiled coil.

The protein belongs to the TRAFAC class myosin-kinesin ATPase superfamily. Myosin family. In terms of assembly, muscle myosin is a hexameric protein that consists of 2 heavy chain subunits (MHC), 2 alkali light chain subunits (MLC) and 2 regulatory light chain subunits (MLC-2).

It is found in the cytoplasm. The protein resides in the myofibril. Muscle contraction. The chain is Myosin-15 (MYH15) from Homo sapiens (Human).